Reading from the N-terminus, the 527-residue chain is Light-independent protochlorophyllide reductase subunit B (527 aa).

Asp-36 serves as a coordination point for [4Fe-4S] cluster. Asp-290 (proton donor) is an active-site residue. Substrate is bound at residue 425-426; sequence GL.

The protein belongs to the ChlB/BchB/BchZ family. Protochlorophyllide reductase is composed of three subunits; ChlL, ChlN and ChlB. Forms a heterotetramer of two ChlB and two ChlN subunits. The cofactor is [4Fe-4S] cluster.

It carries out the reaction chlorophyllide a + oxidized 2[4Fe-4S]-[ferredoxin] + 2 ADP + 2 phosphate = protochlorophyllide a + reduced 2[4Fe-4S]-[ferredoxin] + 2 ATP + 2 H2O. The protein operates within porphyrin-containing compound metabolism; chlorophyll biosynthesis (light-independent). Functionally, component of the dark-operative protochlorophyllide reductase (DPOR) that uses Mg-ATP and reduced ferredoxin to reduce ring D of protochlorophyllide (Pchlide) to form chlorophyllide a (Chlide). This reaction is light-independent. The NB-protein (ChlN-ChlB) is the catalytic component of the complex. The chain is Light-independent protochlorophyllide reductase subunit B from Synechococcus sp. (strain RCC307).